The chain runs to 305 residues: Acetylglutamate kinase (305 aa).

Substrate is bound by residues 67-68 (GG), arginine 89, and asparagine 190.

The protein belongs to the acetylglutamate kinase family. ArgB subfamily.

The protein localises to the cytoplasm. It carries out the reaction N-acetyl-L-glutamate + ATP = N-acetyl-L-glutamyl 5-phosphate + ADP. The protein operates within amino-acid biosynthesis; L-arginine biosynthesis; N(2)-acetyl-L-ornithine from L-glutamate: step 2/4. Its function is as follows. Catalyzes the ATP-dependent phosphorylation of N-acetyl-L-glutamate. This is Acetylglutamate kinase from Bifidobacterium longum subsp. infantis (strain ATCC 15697 / DSM 20088 / JCM 1222 / NCTC 11817 / S12).